We begin with the raw amino-acid sequence, 700 residues long: Acetoacetyl-CoA synthetase (700 aa).

The tract at residues 1–35 (MTAVSANGKTTEKHENGAHTNGTTNGTTNGSMNGN) is disordered. Residues 18 to 35 (AHTNGTTNGTTNGSMNGN) show a composition bias toward low complexity.

Belongs to the ATP-dependent AMP-binding enzyme family. Present in most cells of the organism.

It is found in the cytoplasm. The protein localises to the nucleus. It catalyses the reaction acetoacetate + ATP + CoA = acetoacetyl-CoA + AMP + diphosphate. Activates acetoacetate to acetoacetyl-CoA. Negatively regulates let-60 Ras activity during vulval induction. This Caenorhabditis elegans protein is Acetoacetyl-CoA synthetase (sur-5).